The sequence spans 27 residues: GFASFLGKALKAALKIGANMLGGAPQQ.

In terms of tissue distribution, expressed by the skin glands.

Its subcellular location is the secreted. Functionally, antimicrobial peptide. The protein is Caerulein precursor fragment R8 of Xenopus ruwenzoriensis (Uganda clawed frog).